The following is a 67-amino-acid chain: Nigrocin-2GRc (67 aa).

The N-terminal stretch at 1–22 (MFTMKKSMLLLFFLGTISLSLC) is a signal peptide. The propeptide occupies 23-46 (EQERNADEEERRDEEVAKMEEIKR). Cysteine 61 and cysteine 67 are disulfide-bonded.

Expressed by the skin glands.

The protein resides in the secreted. In terms of biological role, antimicrobial peptide active at least against the Gram-positive bacterium S.aureus but with otherwise unclear activity spectrum. Lacks hemolytic activity against rabbit or human erythrocytes. In Odorrana grahami (Yunnanfu frog), this protein is Nigrocin-2GRc.